A 64-amino-acid polypeptide reads, in one-letter code: Large ribosomal subunit protein uL29 (64 aa).

It belongs to the universal ribosomal protein uL29 family.

The protein is Large ribosomal subunit protein uL29 of Dichelobacter nodosus (strain VCS1703A).